The following is a 375-amino-acid chain: Probable cytochrome c oxidase subunit 2 (375 aa).

3 consecutive transmembrane segments (helical) span residues 36–56 (LAVS…DNVW), 80–100 (IIAA…TVVF), and 122–142 (LTYT…TVVV). Cu cation-binding residues include H264, C305, C309, and H313. Over residues 353-363 (VATSTRPFNTD) the composition is skewed to polar residues. The tract at residues 353-375 (VATSTRPFNTDRTVKSAAAPEAE) is disordered.

The protein belongs to the cytochrome c oxidase subunit 2 family. It depends on Cu cation as a cofactor. The cofactor is heme.

It localises to the cell membrane. It catalyses the reaction 4 Fe(II)-[cytochrome c] + O2 + 8 H(+)(in) = 4 Fe(III)-[cytochrome c] + 2 H2O + 4 H(+)(out). Its function is as follows. Subunits I and II form the functional core of the enzyme complex. Electrons originating in cytochrome c are transferred via heme a and Cu(A) to the binuclear center formed by heme a3 and Cu(B). The protein is Probable cytochrome c oxidase subunit 2 (ctaC) of Nocardia farcinica (strain IFM 10152).